We begin with the raw amino-acid sequence, 431 residues long: Adenylosuccinate synthetase (431 aa).

Residues 12-18 (GDEGKGK) and 40-42 (GHS) each bind GTP. D13 functions as the Proton acceptor in the catalytic mechanism. Mg(2+)-binding residues include D13 and G40. IMP contacts are provided by residues 13–16 (DEGK) and 38–41 (NAGH). Catalysis depends on H41, which acts as the Proton donor. Positions 114-133 (QQQERDRSKNGEKIGTTNKG) are disordered. The segment covering 115–125 (QQERDRSKNGE) has biased composition (basic and acidic residues). IMP is bound by residues T130, R144, Q225, T240, and R304. Position 300–306 (300–306 (TVTKRPR)) interacts with substrate. GTP contacts are provided by residues R306, 332-334 (CLD), and 414-416 (SIG).

This sequence belongs to the adenylosuccinate synthetase family. Homodimer. Mg(2+) is required as a cofactor.

It localises to the cytoplasm. It carries out the reaction IMP + L-aspartate + GTP = N(6)-(1,2-dicarboxyethyl)-AMP + GDP + phosphate + 2 H(+). It participates in purine metabolism; AMP biosynthesis via de novo pathway; AMP from IMP: step 1/2. Functionally, plays an important role in the de novo pathway of purine nucleotide biosynthesis. Catalyzes the first committed step in the biosynthesis of AMP from IMP. In Pediococcus pentosaceus (strain ATCC 25745 / CCUG 21536 / LMG 10740 / 183-1w), this protein is Adenylosuccinate synthetase.